Consider the following 209-residue polypeptide: Hyperpolarization-activated voltage-gated potassium channel (209 aa).

Residues Met1 to Lys10 are Cytoplasmic-facing. The chain crosses the membrane as a helical span at residues Ile11–Thr31. At Tyr32–Asp38 the chain is on the extracellular side. A helical transmembrane segment spans residues Leu39–Phe59. At Tyr60–Asp71 the chain is on the cytoplasmic side. A helical membrane pass occupies residues Ile72–Phe92. The Extracellular segment spans residues Tyr93–Ala96. The chain crosses the membrane as a helical; Voltage-sensor span at residues Phe97–Leu117. The Cytoplasmic portion of the chain corresponds to Arg118–Ala125. A helical membrane pass occupies residues Leu126 to Val146. The Extracellular segment spans residues Glu147–Asp181. The Selectivity filter motif lies at Thr170–Asp175. A helical transmembrane segment spans residues Ala182–Leu202. Topologically, residues Gln203–Asp209 are cytoplasmic.

Belongs to the potassium channel family. In terms of assembly, homotetramer.

Its subcellular location is the cell membrane. Its function is as follows. Voltage-gated potassium-selective channel opened by hyperpolarization. The polypeptide is Hyperpolarization-activated voltage-gated potassium channel (mvp) (Methanocaldococcus jannaschii (strain ATCC 43067 / DSM 2661 / JAL-1 / JCM 10045 / NBRC 100440) (Methanococcus jannaschii)).